A 174-amino-acid chain; its full sequence is Male-enhanced antigen 1 (174 aa).

Disordered regions lie at residues 1 to 83 (MAAV…DGAA) and 95 to 123 (HLPDPPLESEDEDEEGAAALSSHSSIPMD). Acidic residues-rich tracts occupy residues 38–48 (SSEEPEEEQEE), 65–82 (PEQEEVELAPVGEGEDGA), and 101–110 (LESEDEDEEG). The residue at position 103 (Ser103) is a Phosphoserine.

In terms of tissue distribution, highly expressed in testis. Transcripts can be found in primary and secondary spermatocytes, and spermatids, but the protein itself is only detected in spermatids. No expression in Leydig cells, spermatogonia, or sperm. Very weak expression in the heart, kidney, spleen, thymus and ovary.

Its function is as follows. May play an important role in spermatogenesis and/or testis development. The protein is Male-enhanced antigen 1 (Mea1) of Mus musculus (Mouse).